A 542-amino-acid polypeptide reads, in one-letter code: Cytochrome P450 27C1 (542 aa).

The N-terminal 80 residues, 1 to 80, are a transit peptide targeting the mitochondrion; it reads MQTSAMALLA…LAAMPGPRTL (80 aa). Positions 20 to 75 are disordered; it reads APERGGLLGGGAPRRPQPAGARLPAGARAEDKGAGRPGSPPGGGRAEGPRSLAAMP. The span at 32 to 46 shows a compositional bias: low complexity; the sequence is PRRPQPAGARLPAGA. Cys-488 contacts heme.

The protein belongs to the cytochrome P450 family. The cofactor is heme. As to expression, widely expressed, with highest levels in the liver, kidney and pancreas. In terms of tissue distribution, expressed in the skin (at protein level).

Its subcellular location is the mitochondrion membrane. It carries out the reaction all-trans-retinol + 2 reduced [adrenodoxin] + O2 + 2 H(+) = all-trans-3,4-didehydroretinol + 2 oxidized [adrenodoxin] + 2 H2O. The enzyme catalyses all-trans-retinol + 2 reduced [adrenodoxin] + O2 + 2 H(+) = all-trans-4-hydroxyretinol + 2 oxidized [adrenodoxin] + H2O. It catalyses the reaction all-trans-retinol + 2 reduced [adrenodoxin] + O2 + 2 H(+) = all-trans-3-hydroxyretinol + 2 oxidized [adrenodoxin] + H2O. Its pathway is cofactor metabolism; retinol metabolism. Functionally, a cytochrome P450 monooxygenase that catalyzes the 3,4 desaturation of all-trans-retinol (also called vitamin A1) to all-trans-3,4-didehydroretinol (also called vitamin A2) in the skin. Desaturates with lower efficiency all-trans retinal and all-trans retinoic acid. Forms minor amounts of 3-hydroxy and 4-hydroxy all-trans-retinol derivatives. Mechanistically, uses molecular oxygen inserting one oxygen atom into a substrate and reducing the second into a water molecule. Two electrons are provided by NADPH via a two-protein mitochondrial transfer system comprising flavoprotein FDXR (adrenodoxin/ferredoxin reductase) and nonheme iron-sulfur protein FDX1 or FDX2 (adrenodoxin/ferredoxin). The chain is Cytochrome P450 27C1 from Homo sapiens (Human).